The sequence spans 211 residues: Thiamine-phosphate synthase (211 aa).

Residues 37–41 and N69 contribute to the 4-amino-2-methyl-5-(diphosphooxymethyl)pyrimidine site; that span reads QLRIK. Residues D70 and D89 each contribute to the Mg(2+) site. 4-amino-2-methyl-5-(diphosphooxymethyl)pyrimidine is bound at residue S108. 134 to 136 contacts 2-[(2R,5Z)-2-carboxy-4-methylthiazol-5(2H)-ylidene]ethyl phosphate; it reads TQT. A 4-amino-2-methyl-5-(diphosphooxymethyl)pyrimidine-binding site is contributed by K137. Residues G166 and 186–187 each bind 2-[(2R,5Z)-2-carboxy-4-methylthiazol-5(2H)-ylidene]ethyl phosphate; that span reads VS.

This sequence belongs to the thiamine-phosphate synthase family. The cofactor is Mg(2+).

It catalyses the reaction 2-[(2R,5Z)-2-carboxy-4-methylthiazol-5(2H)-ylidene]ethyl phosphate + 4-amino-2-methyl-5-(diphosphooxymethyl)pyrimidine + 2 H(+) = thiamine phosphate + CO2 + diphosphate. It carries out the reaction 2-(2-carboxy-4-methylthiazol-5-yl)ethyl phosphate + 4-amino-2-methyl-5-(diphosphooxymethyl)pyrimidine + 2 H(+) = thiamine phosphate + CO2 + diphosphate. The catalysed reaction is 4-methyl-5-(2-phosphooxyethyl)-thiazole + 4-amino-2-methyl-5-(diphosphooxymethyl)pyrimidine + H(+) = thiamine phosphate + diphosphate. It participates in cofactor biosynthesis; thiamine diphosphate biosynthesis; thiamine phosphate from 4-amino-2-methyl-5-diphosphomethylpyrimidine and 4-methyl-5-(2-phosphoethyl)-thiazole: step 1/1. Condenses 4-methyl-5-(beta-hydroxyethyl)thiazole monophosphate (THZ-P) and 2-methyl-4-amino-5-hydroxymethyl pyrimidine pyrophosphate (HMP-PP) to form thiamine monophosphate (TMP). The protein is Thiamine-phosphate synthase of Salmonella paratyphi A (strain ATCC 9150 / SARB42).